A 168-amino-acid chain; its full sequence is Xanthine-guanine phosphoribosyltransferase (168 aa).

5-phospho-alpha-D-ribose 1-diphosphate is bound by residues 43-44 (RG) and 102-110 (DDLVDTGAT). Residue D103 participates in Mg(2+) binding. Guanine-binding residues include D106 and I149. Xanthine-binding residues include D106 and I149. GMP-binding positions include 106–110 (DTGAT) and 148–149 (WI).

The protein belongs to the purine/pyrimidine phosphoribosyltransferase family. XGPT subfamily. In terms of assembly, homotetramer. The cofactor is Mg(2+).

Its subcellular location is the cell inner membrane. The catalysed reaction is GMP + diphosphate = guanine + 5-phospho-alpha-D-ribose 1-diphosphate. It catalyses the reaction XMP + diphosphate = xanthine + 5-phospho-alpha-D-ribose 1-diphosphate. It carries out the reaction IMP + diphosphate = hypoxanthine + 5-phospho-alpha-D-ribose 1-diphosphate. It participates in purine metabolism; GMP biosynthesis via salvage pathway; GMP from guanine: step 1/1. The protein operates within purine metabolism; XMP biosynthesis via salvage pathway; XMP from xanthine: step 1/1. Functionally, purine salvage pathway enzyme that catalyzes the transfer of the ribosyl-5-phosphate group from 5-phospho-alpha-D-ribose 1-diphosphate (PRPP) to the N9 position of the 6-oxopurines guanine and xanthine to form the corresponding ribonucleotides GMP (guanosine 5'-monophosphate) and XMP (xanthosine 5'-monophosphate), with the release of PPi. To a lesser extent, also acts on hypoxanthine. This chain is Xanthine-guanine phosphoribosyltransferase, found in Nitrobacter hamburgensis (strain DSM 10229 / NCIMB 13809 / X14).